The primary structure comprises 271 residues: Large ribosomal subunit protein uL2 (271 aa).

Positions 221–271 are disordered; it reads RGVAMNPVDHPMGGGEGKSSGGHPRNRNGIPSNGFKTRNKKKITNKYIIKK. Basic residues predominate over residues 257–271; that stretch reads TRNKKKITNKYIIKK.

The protein belongs to the universal ribosomal protein uL2 family. Part of the 50S ribosomal subunit. Forms a bridge to the 30S subunit in the 70S ribosome.

Its function is as follows. One of the primary rRNA binding proteins. Required for association of the 30S and 50S subunits to form the 70S ribosome, for tRNA binding and peptide bond formation. It has been suggested to have peptidyltransferase activity; this is somewhat controversial. Makes several contacts with the 16S rRNA in the 70S ribosome. The sequence is that of Large ribosomal subunit protein uL2 from Karelsulcia muelleri (strain GWSS) (Sulcia muelleri).